A 336-amino-acid polypeptide reads, in one-letter code: L-rhamnono-gamma-lactonase (336 aa).

The protein belongs to the metallo-dependent hydrolases superfamily. A divalent metal cation is required as a cofactor.

It catalyses the reaction L-rhamnono-1,4-lactone + H2O = L-rhamnonate + H(+). Inhibited by Zn(2+), Fe(2+) and Cu(2+), but not by EDTA. In terms of biological role, hydrolase with high substrate specificity for L-rhamnono-1,4-lactone. Catalyzes the second step in an alternative pathway for rhamnose utilization that does not involve phosphorylated intermediates. The polypeptide is L-rhamnono-gamma-lactonase (LRA2) (Scheffersomyces stipitis (strain ATCC 58785 / CBS 6054 / NBRC 10063 / NRRL Y-11545) (Yeast)).